A 465-amino-acid chain; its full sequence is WAS protein family homolog 2 (465 aa).

The tract at residues 1–54 (MTPVRMQHSLAGQTYAVPLIQPDLRREEAVQQMADALQYLQKVSGDIFSRISQQ) is required for WASH complex assembly. The segment at 1–167 (MTPVRMQHSL…EGLGGLPSNI (167 aa)) is WHD1. Lysine 220 is covalently cross-linked (Glycyl lysine isopeptide (Lys-Gly) (interchain with G-Cter in ubiquitin)). 2 disordered regions span residues 297–407 (QDGV…QGGH) and 422–465 (GISG…DWES). A compositionally biased stretch (pro residues) spans 302-314 (TPPPPPPPPPPAP). The tract at residues 349-465 (QGAPREVVDP…AEEDEDDWES (117 aa)) is VCA. Positions 361 to 383 (GRATLLESIRQAGGIGKAKLRSM) constitute a WH2 domain. Residues 382 to 398 (SMKERKLEKKKQKEQEQ) show a composition bias toward basic and acidic residues. The segment covering 424–436 (SGKGPGAGEGPGG) has biased composition (gly residues). The segment covering 456–465 (AEEDEDDWES) has biased composition (acidic residues).

It belongs to the WASH1 family. As to quaternary structure, component of the WASH core complex also described as WASH regulatory complex (SHRC) composed of WASH (WASHC1, WASH2P or WASH3P), WASHC2 (WASHC2A or WASHC2C), WASHC3, WASHC4 and WASHC5. The WASH core complex associates with the F-actin-capping protein dimer (formed by CAPZA1, CAPZA2 or CAPZA3 and CAPZB) in a transient or substoichiometric manner which was initially described as WASH complex. Interacts (via WHD1 region) with WASHC2C; the interaction is direct. Interacts with alpha-tubulin. Interacts with BECN1; WASHC1 and AMBRA1 can competitively interact with BECN1. Interacts with BLOC1S2; may associate with the BLOC-1 complex. Interacts with tubulin gamma chain (TUBG1 or TUBG2). Interacts with EXOC1, EXOC4, EXOC8; in MMP14-positive endosomes in breast tumor cells; indicative for an association with the exocyst complex.

Its subcellular location is the early endosome membrane. The protein localises to the recycling endosome membrane. It localises to the late endosome. The protein resides in the cytoplasmic vesicle. It is found in the autophagosome. Its subcellular location is the cytoplasm. The protein localises to the cytoskeleton. It localises to the microtubule organizing center. The protein resides in the centrosome. It is found in the centriole. Its function is as follows. Acts as a nucleation-promoting factor at the surface of endosomes, where it recruits and activates the Arp2/3 complex to induce actin polymerization, playing a key role in the fission of tubules that serve as transport intermediates during endosome sorting. Involved in endocytic trafficking of EGF. Involved in transferrin receptor recycling. Regulates the trafficking of endosomal alpha5beta1 integrin to the plasma membrane and involved in invasive cell migration. In T-cells involved in endosome-to-membrane recycling of receptors including T-cell receptor (TCR), CD28 and ITGAL; proposed to be implicated in T-cell proliferation and effector function. In dendritic cells involved in endosome-to-membrane recycling of major histocompatibility complex (MHC) class II probably involving retromer and subsequently allowing antigen sampling, loading and presentation during T-cell activation. Involved in Arp2/3 complex-dependent actin assembly driving Salmonella typhimurium invasion independent of ruffling. Involved in the exocytosis of MMP14 leading to matrix remodeling during invasive migration and implicating late endosome-to-plasma membrane tubular connections and cooperation with the exocyst complex. Involved in negative regulation of autophagy independently from its role in endosomal sorting by inhibiting BECN1 ubiquitination to inactivate PIK3C3/Vps34 activity. The protein is WAS protein family homolog 2 (WASH2P) of Homo sapiens (Human).